The sequence spans 239 residues: Regulator protein TubY (239 aa).

Residues I138–R239 form a required to bind TubZ region. Residues L150–K229 are a coiled coil. A compositionally biased stretch (basic and acidic residues) spans E217–N228. Residues E217 to R239 form a disordered region. Positions K229–R239 are enriched in low complexity.

Forms homooctamers in the absence of the last 13 residues; the coiled coil domain is required for oligomerization. In the presence of GTP and Mg(2+) binds to TubZ and also to TubZ-TubR-tubC DNA; the latter is reshaped from large filament bundles to rings of 30-40 nm diameter.

It localises to the host cytoplasm. Its function is as follows. A probable TubZ filament regulator that is part of the type III partition system presumably used to ensure correct segregation of this bacteriophage. Binds to TubZ in the presence of GTP and Mg(2+), and to TubZ-TubR-tubC (tubC is the centromere-like site). The latter complex is reshaped from large bundles to rings by TubY. Modifies TubZ filaments formed in the presence of GDP to make them thinner and more flexible; in GDP and lacking the last 8 residues of TubZ makes rings without TubT-tubC. In Clostridium botulinum C (Clostridium botulinum C bacteriophage), this protein is Regulator protein TubY.